The primary structure comprises 268 residues: Undecaprenyl-diphosphatase (268 aa).

8 helical membrane-spanning segments follow: residues 8–28, 41–61, 83–103, 108–128, 144–164, 184–204, 218–238, and 246–266; these read VILGIIEGVTEFLPVSSTGHL, AFWDSFTVLIQLGAILAIVGL, FVIGVLVAFLPAVVVGLVAGK, VLFNPWVVCFTLIVGGAILLW, FPLLMYLYIGIAQCVAMIPGV, AAEFSFFLAIPTMIGAFAYDF, IVAIGFVVSFITAVIVVKTFL, and FVVFAWWRVIVGTLGLIALAL.

Belongs to the UppP family.

It is found in the cell inner membrane. It catalyses the reaction di-trans,octa-cis-undecaprenyl diphosphate + H2O = di-trans,octa-cis-undecaprenyl phosphate + phosphate + H(+). Its function is as follows. Catalyzes the dephosphorylation of undecaprenyl diphosphate (UPP). Confers resistance to bacitracin. The sequence is that of Undecaprenyl-diphosphatase from Bradyrhizobium diazoefficiens (strain JCM 10833 / BCRC 13528 / IAM 13628 / NBRC 14792 / USDA 110).